We begin with the raw amino-acid sequence, 419 residues long: NF-kappa-B essential modulator (419 aa).

Positions Met1–Val197 are required for interaction with and ubiquitination by MARCHF2. Phosphoserine; by IKKB is present on residues Ser31 and Ser43. The segment at Glu44–Lys111 is interaction with CHUK/IKBKB. Residues Glu49 to Met356 adopt a coiled-coil conformation. Phosphoserine is present on Ser68. Ser85 is subject to Phosphoserine; by ATM. Residues Lys111, Lys139, Lys143, Lys226, Lys246, and Lys264 each participate in a glycyl lysine isopeptide (Lys-Gly) (interchain with G-Cter in ubiquitin) cross-link. The segment at Leu150–Gly257 is interaction with TANK. A ubiquitin-binding (UBAN) region spans residues Asp242–Ser350. Positions Lys246–Gln365 are self-association. The interval Gly251–Glu419 is required for interaction with TNFAIP3. A Glycyl lysine isopeptide (Lys-Gly) (interchain with G-Cter in SUMO); alternate cross-link involves residue Lys277. Residue Lys277 forms a Glycyl lysine isopeptide (Lys-Gly) (interchain with G-Cter in ubiquitin); alternate linkage. Residues Lys283, Lys285, Lys292, and Lys302 each participate in a glycyl lysine isopeptide (Lys-Gly) (interchain with G-Cter in ubiquitin) cross-link. A Glycyl lysine isopeptide (Lys-Gly) (interchain with G-Cter in SUMO); alternate cross-link involves residue Lys309. Residue Lys309 forms a Glycyl lysine isopeptide (Lys-Gly) (interchain with G-Cter in ubiquitin); alternate linkage. Glycyl lysine isopeptide (Lys-Gly) (interchain with G-Cter in ubiquitin) cross-links involve residues Lys321 and Lys325. Residues Leu322–Leu343 form a leucine-zipper region. Lys326 participates in a covalent cross-link: Glycyl lysine isopeptide (Lys-Gly) (interchain with G-Cter in ubiquitin and interchain with MARCHF2). Residues Lys358–Phe395 form a disordered region. Positions Ala373 to Arg386 are enriched in low complexity. Position 376 is a phosphoserine; by IKKB (Ser376). The interval Pro382–Glu419 is interaction with CYLD. Position 387 is a phosphoserine (Ser387). Residues Pro389–Glu419 form a CCHC NOA-type zinc finger. Position 397 (Cys397) interacts with Zn(2+). Lys399 is covalently cross-linked (Glycyl lysine isopeptide (Lys-Gly) (interchain with G-Cter in ubiquitin)). Zn(2+)-binding residues include Cys400, His413, and Cys417.

As to quaternary structure, homodimer; disulfide-linked. Component of the I-kappa-B-kinase (IKK) core complex consisting of CHUK, IKBKB and IKBKG; probably four alpha/CHUK-beta/IKBKB dimers are associated with four gamma/IKBKG subunits. The IKK core complex seems to associate with regulatory or adapter proteins to form a IKK-signalosome holo-complex. The IKK complex associates with TERF2IP/RAP1, leading to promote IKK-mediated phosphorylation of RELA/p65. Part of a complex composed of NCOA2, NCOA3, CHUK/IKKA, IKBKB, IKBKG and CREBBP. Interacts with COPS3, CYLD, NALP2, TRPC4AP and PIDD1. Interacts with ATM; the complex is exported from the nucleus. Interacts with TRAF6. Interacts with IKBKE. Interacts with TANK; the interaction is enhanced by IKBKE and TBK1. Part of a ternary complex consisting of TANK, IKBKB and IKBKG. Interacts with ZFAND5. Interacts with RIPK2. Interacts with TNIP1 and TNFAIP3; TNIP1 facilitates the TNFAIP3-mediated de-ubiquitination of IKBKG. Interacts with TNFAIP3; the interaction is induced by TNF stimulation and by polyubiquitin. Binds (via UBAN region) polyubiquitin; binds both 'Lys-63'-linked and linear polyubiquitin, with higher affinity for linear ubiquitin. Interacts with NLRP10. Interacts with TANK; this interaction increases in response to DNA damage. Interacts with USP10; this interaction increases in response to DNA damage. Interacts with ZC3H12A; this interaction increases in response to DNA damage. Interacts with IFIT5; the interaction synergizes the recruitment of IKK to MAP3K7 and enhances IKK phosphorylation. Interacts with TRIM29; this interaction induces IKBKG/NEMO ubiquitination and proteolytic degradation. Interacts with TRIM13; this interaction leads to IKBKG/NEMO ubiquitination. Interacts with ARFIP2. Interacts with RIPK1. Interacts with (ubiquitinated) BCL10; interaction with polyubiquitinated BCL10 via both 'Lys-63'-linked and linear ubiquitin is required for TCR-induced NF-kappa-B activation. Interacts with MARCHF2; during the late stages of macrophage viral and bacterial infection; the interaction leads to ubiquitination and degradation of IKBKG/NEMO. (Microbial infection) Interacts with Molluscum contagiosum virus protein MC005; this interaction inhibits NF-kappa-B activation. In terms of assembly, (Microbial infection) Interacts with HTLV-1 Tax oncoprotein; the interaction activates IKBKG. As to quaternary structure, (Microbial infection) Interacts with Shigella flexneri ipah9.8; the interaction promotes TNIP1-dependent 'Lys-27'-linked polyubiquitination of IKBKG which perturbs NF-kappa-B activation during bacterial infection. (Microbial infection) Interacts with SARS coronavirus-2/SARS-CoV-2 virus protein ORF9B (via N-terminus); the interaction inhibits polyubiquitination through 'Lys-63' and NF-kappa-B activation. Phosphorylation at Ser-68 attenuates aminoterminal homodimerization. Post-translationally, polyubiquitinated on Lys-285 via 'Lys-63'-linked ubiquitin; the ubiquitination is mediated downstream of NOD2 and RIPK2 and probably plays a role in signaling by facilitating interactions with ubiquitin domain-containing proteins and activates the NF-kappa-B pathway. Polyubiquitinated on Lys-285 and Lys-399 through 'Lys-63'-linked ubiquitin; the ubiquitination is mediated by BCL10, MALT1 and TRAF6 and probably plays a role in signaling by facilitating interactions with ubiquitin domain-containing proteins and activates the NF-kappa-B pathway. Monoubiquitinated on Lys-277 and Lys-309; promotes nuclear export. Polyubiquitinated through 'Lys-27' by TRIM23; involved in antiviral innate and inflammatory responses. Linear polyubiquitinated on Lys-111, Lys-143, Lys-226, Lys-246, Lys-264, Lys-277, Lys-285, Lys-292, Lys-302, Lys-309 and Lys-326; the head-to-tail polyubiquitination is mediated by the LUBAC complex and plays a key role in NF-kappa-B activation. Deubiquitinated by USP10 in a TANK-dependent and -independent manner, leading to the negative regulation of NF-kappa-B signaling upon DNA damage. Ubiquitinated at Lys-326 by MARCHF2 following bacterial and viral infection which leads to its degradation. Polyubiquitinated via 'Lys-29'-linked ubiquitin; leading to lysosomal degradation. In terms of processing, sumoylated on Lys-277 and Lys-309 with SUMO1; the modification results in phosphorylation of Ser-85 by ATM leading to a replacement of the sumoylation by mono-ubiquitination on these residues. Neddylated by TRIM40, resulting in stabilization of NFKBIA and down-regulation of NF-kappa-B activity. Post-translationally, (Microbial infection) Cleaved by hepatitis A virus (HAV) protease 3C allowing the virus to disrupt the host innate immune signaling. In terms of processing, (Microbial infection) Deubiquitinated by Epstein-Barr virus BPLF1 on both 'Lys-48' and 'Lys-63'-linked ubiquitin chains; leading to NF-kappa-B signaling inhibition. (Microbial infection) Polyubiquitinated on Lys-309 and Lys-321 via 'Lys-27'-linked ubiquitin by Shigella flexneri E3 ubiquitin-protein ligase ipah9.8, leading to its degradation by the proteasome. Post-translationally, (Microbial infection) Polyubiquitination through 'Lys-63' is interrupted by interaction with SARS coronavirus-2/SARS-CoV-2 virus protein ORF9B which inhibits the NF-kappa-B pathway. As to expression, heart, brain, placenta, lung, liver, skeletal muscle, kidney and pancreas.

The protein localises to the cytoplasm. It localises to the nucleus. Its function is as follows. Regulatory subunit of the IKK core complex which phosphorylates inhibitors of NF-kappa-B thus leading to the dissociation of the inhibitor/NF-kappa-B complex and ultimately the degradation of the inhibitor. Its binding to scaffolding polyubiquitin plays a key role in IKK activation by multiple signaling receptor pathways. Can recognize and bind both 'Lys-63'-linked and linear polyubiquitin upon cell stimulation, with a much higher affinity for linear polyubiquitin. Could be implicated in NF-kappa-B-mediated protection from cytokine toxicity. Essential for viral activation of IRF3. Involved in TLR3- and IFIH1-mediated antiviral innate response; this function requires 'Lys-27'-linked polyubiquitination. (Microbial infection) Also considered to be a mediator for HTLV-1 Tax oncoprotein activation of NF-kappa-B. The polypeptide is NF-kappa-B essential modulator (Homo sapiens (Human)).